We begin with the raw amino-acid sequence, 380 residues long: 2-aminoethylphosphonate--pyruvate transaminase (380 aa).

The residue at position 204 (lysine 204) is an N6-(pyridoxal phosphate)lysine.

The protein belongs to the class-V pyridoxal-phosphate-dependent aminotransferase family. PhnW subfamily. As to quaternary structure, homodimer. Pyridoxal 5'-phosphate is required as a cofactor.

The enzyme catalyses (2-aminoethyl)phosphonate + pyruvate = phosphonoacetaldehyde + L-alanine. Functionally, involved in phosphonate degradation. The protein is 2-aminoethylphosphonate--pyruvate transaminase of Aeromonas hydrophila subsp. hydrophila (strain ATCC 7966 / DSM 30187 / BCRC 13018 / CCUG 14551 / JCM 1027 / KCTC 2358 / NCIMB 9240 / NCTC 8049).